Here is a 461-residue protein sequence, read N- to C-terminus: Zinc transporter 6 (461 aa).

The Cytoplasmic portion of the chain corresponds to 1–33 (MGTIHLFRKPQRSFFGKLLQEFRLVAADRRSWK). The chain crosses the membrane as a helical span at residues 34 to 54 (ILLFGAINLTCTGFLLMWCSS). Residues 55–64 (TNSIALTAYT) are Extracellular-facing. Residues 65–85 (YLTIFDLFSLITCLVSYWVMM) traverse the membrane as a helical segment. Topologically, residues 86-98 (RKPSPAYSFGFER) are cytoplasmic. The helical transmembrane segment at 99–119 (LEVLAVFASTVLAQLGALFIL) threads the bilayer. At 120–134 (KESAERFLEQPEIHT) the chain is on the extracellular side. A helical transmembrane segment spans residues 135 to 155 (GRLLVGTFVALSFNLFTMLSI). Residues 156–200 (RNKPFAYVSEAASTSWLQEHVADLSRSLCGIIPGLSSIFLPRMNP) lie on the Cytoplasmic side of the membrane. A helical transmembrane segment spans residues 201–221 (FVLIDLAGAFALCITYMLIEI). Residues 222-223 (NN) lie on the Extracellular side of the membrane. Residues 224 to 244 (YFAVDTASAIAIALMTFGTMY) form a helical membrane-spanning segment. Residues 245 to 461 (PMSVYSGKVL…TNNRIGQPRP (217 aa)) lie on the Cytoplasmic side of the membrane. Residues 362 to 393 (PPLKGTDDSNPVTSTPTKPSSPPPEFSFNTPG) are disordered. Residues 370-379 (SNPVTSTPTK) are compositionally biased toward low complexity.

This sequence belongs to the cation diffusion facilitator (CDF) transporter (TC 2.A.4) family. SLC30A subfamily. In terms of assembly, heterodimer with SLC30A5; form a functional zinc ion transmembrane transporter.

The protein localises to the golgi apparatus. It is found in the trans-Golgi network membrane. Has probably no intrinsic transporter activity but together with SLC30A5 forms a functional zinc ion:proton antiporter heterodimer, mediating zinc entry into the lumen of organelles along the secretory pathway. As part of that zinc ion:proton antiporter, contributes to zinc ion homeostasis within the early secretory pathway and regulates the activation and folding of enzymes like alkaline phosphatases and enzymes involved in phosphatidylinositol glycan anchor biosynthesis. This Bos taurus (Bovine) protein is Zinc transporter 6 (SLC30A6).